Reading from the N-terminus, the 695-residue chain is Elongation factor G 1 (695 aa).

The tr-type G domain occupies 6 to 284; sequence SKVRNIGISA…AVETYLPCPT (279 aa). GTP is bound by residues 15–22, 82–86, and 136–139; these read AHIDSGKT, DTPGH, and NKCD.

The protein belongs to the TRAFAC class translation factor GTPase superfamily. Classic translation factor GTPase family. EF-G/EF-2 subfamily.

The protein localises to the cytoplasm. Functionally, catalyzes the GTP-dependent ribosomal translocation step during translation elongation. During this step, the ribosome changes from the pre-translocational (PRE) to the post-translocational (POST) state as the newly formed A-site-bound peptidyl-tRNA and P-site-bound deacylated tRNA move to the P and E sites, respectively. Catalyzes the coordinated movement of the two tRNA molecules, the mRNA and conformational changes in the ribosome. This chain is Elongation factor G 1, found in Desulfotalea psychrophila (strain LSv54 / DSM 12343).